The primary structure comprises 225 residues: Uracil-DNA glycosylase (225 aa).

Residue aspartate 65 is the Proton acceptor of the active site.

It belongs to the uracil-DNA glycosylase (UDG) superfamily. UNG family.

The protein localises to the cytoplasm. It carries out the reaction Hydrolyzes single-stranded DNA or mismatched double-stranded DNA and polynucleotides, releasing free uracil.. In terms of biological role, excises uracil residues from the DNA which can arise as a result of misincorporation of dUMP residues by DNA polymerase or due to deamination of cytosine. The chain is Uracil-DNA glycosylase from Bacillus anthracis (strain A0248).